A 245-amino-acid chain; its full sequence is MKNIIVIKLGGIAIENLNDAFIQQINAWHLENKKIIIVHGGGQVISNLLTKNNHSTIKIDGMRVTAKNDLPIIYDALINIVGHQLLERLKESNLEFFQFKEKIKELVSAEFLNKNIYGYVGKVKEINTMLLEKMLSRDIIPIITSLGVNEQGEYLNVNADHLATAIAKKLKVEKLVYMTDVPGVIEKDKTLATLTINEAKTKIENKIITGGMIPKIESAIQTLESGVESILIANNLQKGTIIRGD.

Substrate-binding positions include 41–42 (GG), Arg-63, and Asn-156.

The protein belongs to the acetylglutamate kinase family. ArgB subfamily.

It localises to the cytoplasm. The catalysed reaction is N-acetyl-L-glutamate + ATP = N-acetyl-L-glutamyl 5-phosphate + ADP. It participates in amino-acid biosynthesis; L-arginine biosynthesis; N(2)-acetyl-L-ornithine from L-glutamate: step 2/4. Catalyzes the ATP-dependent phosphorylation of N-acetyl-L-glutamate. This chain is Acetylglutamate kinase, found in Staphylococcus epidermidis (strain ATCC 35984 / DSM 28319 / BCRC 17069 / CCUG 31568 / BM 3577 / RP62A).